Reading from the N-terminus, the 175-residue chain is Peptide deformylase (175 aa).

Cysteine 96 and histidine 138 together coordinate Fe cation. Residue glutamate 139 is part of the active site. Histidine 142 contributes to the Fe cation binding site.

This sequence belongs to the polypeptide deformylase family. Requires Fe(2+) as cofactor.

The catalysed reaction is N-terminal N-formyl-L-methionyl-[peptide] + H2O = N-terminal L-methionyl-[peptide] + formate. Removes the formyl group from the N-terminal Met of newly synthesized proteins. Requires at least a dipeptide for an efficient rate of reaction. N-terminal L-methionine is a prerequisite for activity but the enzyme has broad specificity at other positions. This Rhodopseudomonas palustris (strain BisB5) protein is Peptide deformylase.